The chain runs to 1503 residues: Dynein axonemal assembly factor 1 homolog (1503 aa).

6 LRR repeats span residues 34–56 (RLND…EEYT), 57–78 (ELKC…EKLG), 79–100 (KLKC…DPCR), 101–122 (ELDT…GTNI), 125–146 (VLNT…SDLI), and 150–171 (TLSV…KIFE). One can recognise an LRRCT domain in the interval 185-223 (PVVSRLPQYRKTLILACKELTYLDSRPVFPRDRACAEAW). Disordered regions lie at residues 249-280 (SINC…DDTC), 305-328 (EQPI…TSSQ), 956-1033 (DSGD…DHDE), and 1295-1315 (STNN…STSE). A compositionally biased stretch (acidic residues) spans 973–985 (TESEDYDTAEDEY). The segment covering 1014–1031 (QKQDKPDTVEEVGKKNDH) has biased composition (basic and acidic residues). Low complexity predominate over residues 1303–1314 (TKKTLPTKTSTS).

The protein belongs to the DNAAF1 family.

The protein resides in the cell projection. The protein localises to the cilium. Cilium-specific protein required for cilia structures. This is Dynein axonemal assembly factor 1 homolog (dtr) from Drosophila erecta (Fruit fly).